Here is a 416-residue protein sequence, read N- to C-terminus: 3-isopropylmalate dehydratase large subunit 2 (416 aa).

Residues Cys-296, Cys-356, and Cys-359 each contribute to the [4Fe-4S] cluster site.

It belongs to the aconitase/IPM isomerase family. LeuC type 2 subfamily. In terms of assembly, heterodimer of LeuC and LeuD. Requires [4Fe-4S] cluster as cofactor.

It catalyses the reaction (2R,3S)-3-isopropylmalate = (2S)-2-isopropylmalate. The protein operates within amino-acid biosynthesis; L-leucine biosynthesis; L-leucine from 3-methyl-2-oxobutanoate: step 2/4. Catalyzes the isomerization between 2-isopropylmalate and 3-isopropylmalate, via the formation of 2-isopropylmaleate. The sequence is that of 3-isopropylmalate dehydratase large subunit 2 from Archaeoglobus fulgidus (strain ATCC 49558 / DSM 4304 / JCM 9628 / NBRC 100126 / VC-16).